The primary structure comprises 349 residues: S-adenosylmethionine:tRNA ribosyltransferase-isomerase (349 aa).

The protein belongs to the QueA family. In terms of assembly, monomer.

The protein resides in the cytoplasm. The catalysed reaction is 7-aminomethyl-7-carbaguanosine(34) in tRNA + S-adenosyl-L-methionine = epoxyqueuosine(34) in tRNA + adenine + L-methionine + 2 H(+). It participates in tRNA modification; tRNA-queuosine biosynthesis. Transfers and isomerizes the ribose moiety from AdoMet to the 7-aminomethyl group of 7-deazaguanine (preQ1-tRNA) to give epoxyqueuosine (oQ-tRNA). The polypeptide is S-adenosylmethionine:tRNA ribosyltransferase-isomerase (Pseudomonas entomophila (strain L48)).